The primary structure comprises 564 residues: Alpha-amylase 3 (564 aa).

A signal peptide spans 1–21 (MFGVYFVLLFLSSALIHVANA). Cys-51 and Cys-59 are oxidised to a cystine. Substrate contacts are provided by Asn-56 and Trp-105. Asn-143 contacts Ca(2+). A disulfide bridge connects residues Cys-172 and Cys-188. Asn-181 carries N-linked (GlcNAc...) asparagine glycosylation. Position 198 (Asp-198) interacts with Ca(2+). Arg-227 contributes to the substrate binding site. A Ca(2+)-binding site is contributed by Asp-229. The Nucleophile role is filled by Asp-229. 232–233 (KM) lines the substrate pocket. Asn-235 is a glycosylation site (N-linked (GlcNAc...) asparagine). Glu-253 contributes to the Ca(2+) binding site. The active-site Proton donor is Glu-253. Cys-263 and Cys-306 are oxidised to a cystine. Residues Asn-282 and Asn-305 are each glycosylated (N-linked (GlcNAc...) asparagine). 2 residues coordinate substrate: Asp-322 and Arg-369. N-linked (GlcNAc...) asparagine glycosylation is found at Asn-438, Asn-447, and Asn-498. Ser-538 carries the GPI-anchor amidated serine lipid modification. Residues 539-564 (SSRLILSFKTLVFGLGVTAMLFVLFF) constitute a propeptide, removed in mature form.

This sequence belongs to the glycosyl hydrolase 13 family. The cofactor is Ca(2+). N-glycosylated.

The protein resides in the cell membrane. The catalysed reaction is Endohydrolysis of (1-&gt;4)-alpha-D-glucosidic linkages in polysaccharides containing three or more (1-&gt;4)-alpha-linked D-glucose units.. In terms of biological role, has a role in cell wall biosynthesis where it is involved in maintaining cell wall strength and shape. The chain is Alpha-amylase 3 (aah3) from Schizosaccharomyces pombe (strain 972 / ATCC 24843) (Fission yeast).